A 204-amino-acid chain; its full sequence is Methylthioribulose-1-phosphate dehydratase (204 aa).

Residues histidine 94 and histidine 96 each contribute to the Zn(2+) site.

Belongs to the aldolase class II family. MtnB subfamily. Zn(2+) serves as cofactor.

The enzyme catalyses 5-(methylsulfanyl)-D-ribulose 1-phosphate = 5-methylsulfanyl-2,3-dioxopentyl phosphate + H2O. It participates in amino-acid biosynthesis; L-methionine biosynthesis via salvage pathway; L-methionine from S-methyl-5-thio-alpha-D-ribose 1-phosphate: step 2/6. Catalyzes the dehydration of methylthioribulose-1-phosphate (MTRu-1-P) into 2,3-diketo-5-methylthiopentyl-1-phosphate (DK-MTP-1-P). The sequence is that of Methylthioribulose-1-phosphate dehydratase from Cronobacter sakazakii (strain ATCC BAA-894) (Enterobacter sakazakii).